A 152-amino-acid polypeptide reads, in one-letter code: D-aminoacyl-tRNA deacylase (152 aa).

The Gly-cisPro motif, important for rejection of L-amino acids motif lies at 137-138 (GP).

The protein belongs to the DTD family. Homodimer.

It is found in the cytoplasm. The catalysed reaction is glycyl-tRNA(Ala) + H2O = tRNA(Ala) + glycine + H(+). It carries out the reaction a D-aminoacyl-tRNA + H2O = a tRNA + a D-alpha-amino acid + H(+). Its function is as follows. An aminoacyl-tRNA editing enzyme that deacylates mischarged D-aminoacyl-tRNAs. Also deacylates mischarged glycyl-tRNA(Ala), protecting cells against glycine mischarging by AlaRS. Acts via tRNA-based rather than protein-based catalysis; rejects L-amino acids rather than detecting D-amino acids in the active site. By recycling D-aminoacyl-tRNA to D-amino acids and free tRNA molecules, this enzyme counteracts the toxicity associated with the formation of D-aminoacyl-tRNA entities in vivo and helps enforce protein L-homochirality. This Methylibium petroleiphilum (strain ATCC BAA-1232 / LMG 22953 / PM1) protein is D-aminoacyl-tRNA deacylase.